The primary structure comprises 546 residues: Probable protein kinase UbiB (546 aa).

One can recognise a Protein kinase domain in the interval 124 to 502; the sequence is DFDITPLASA…RVKQGQSRYL (379 aa). Residues 130–138 and Lys153 contribute to the ATP site; that span reads LASASIAQV. Catalysis depends on Asp288, which acts as the Proton acceptor. The next 2 helical transmembrane spans lie at 501–518 and 523–542; these read YLFG…LLFI and WGMS…LIGW.

Belongs to the ABC1 family. UbiB subfamily.

Its subcellular location is the cell inner membrane. The protein operates within cofactor biosynthesis; ubiquinone biosynthesis [regulation]. Its function is as follows. Is probably a protein kinase regulator of UbiI activity which is involved in aerobic coenzyme Q (ubiquinone) biosynthesis. The protein is Probable protein kinase UbiB of Cronobacter sakazakii (strain ATCC BAA-894) (Enterobacter sakazakii).